Reading from the N-terminus, the 208-residue chain is Uracil phosphoribosyltransferase (208 aa).

5-phospho-alpha-D-ribose 1-diphosphate-binding positions include R77, R102, and 129-137 (DPMLATGNS). Residues I193 and 198–200 (GDA) each bind uracil. D199 is a binding site for 5-phospho-alpha-D-ribose 1-diphosphate.

The protein belongs to the UPRTase family. Mg(2+) serves as cofactor.

It catalyses the reaction UMP + diphosphate = 5-phospho-alpha-D-ribose 1-diphosphate + uracil. Its pathway is pyrimidine metabolism; UMP biosynthesis via salvage pathway; UMP from uracil: step 1/1. With respect to regulation, allosterically activated by GTP. In terms of biological role, catalyzes the conversion of uracil and 5-phospho-alpha-D-ribose 1-diphosphate (PRPP) to UMP and diphosphate. This chain is Uracil phosphoribosyltransferase, found in Mycoplasmopsis agalactiae (strain NCTC 10123 / CIP 59.7 / PG2) (Mycoplasma agalactiae).